The following is a 303-amino-acid chain: Elongation factor Ts (303 aa).

The involved in Mg(2+) ion dislocation from EF-Tu stretch occupies residues 81–84 (TDFV).

This sequence belongs to the EF-Ts family.

The protein resides in the cytoplasm. Functionally, associates with the EF-Tu.GDP complex and induces the exchange of GDP to GTP. It remains bound to the aminoacyl-tRNA.EF-Tu.GTP complex up to the GTP hydrolysis stage on the ribosome. This Mesomycoplasma hyopneumoniae (strain 7448) (Mycoplasma hyopneumoniae) protein is Elongation factor Ts.